The following is a 724-amino-acid chain: MLDPTSERDLFDQENMEEISQLASLEMSGDVVANTNSTVVLEKPSYPDSVYVTAANIFQGIRIQRSPDKVIINYGSEPLQPSSSRSEDESFQRLSYELAFSTLKYQDILESILIDSYIFSSTTIASQLNSLIIVMLYDFQDRKFQPRILSENEETIPEVQEVENLLNGFKTKLAAALARCRIKHDALSIYHILPETVRKQEQRASTLPLYAWINTSKISLEEVYNNLRRKGYSKVKSITSVNEKVYAVDQHCFNVLIFPAHLKTDLLNIDLIKDYKLIFQDKSRSLAVHSVKALINIDDDVLMVNTGSWYTVAHMSILTSGHTSKIFVCGIQQEEKDFNARKLFTRMGCQNIEILHETFLSIESKDHRLQNVKVILLLPRCSSLGVSNPVEFILNEHEDKSLLQDLSQGGLPKDKLETLVQQQFEQLTHAMKFTKVQAIVYCTCSVSKEENEDVVEKALEYQSSGVKMQPYRLSPPVLPLCTLKEIELSMDRFFRLEPSDMNNGCFLSILTRERDPSETVSVKDVLARAAAKGLLEGVEVGKTLKRDKKRKKSKALPSRAPHHGDPLRDHLAVDGNDTSNVQMKISELLHRESKISTSTKMSAPAKTVSQAGTSSQVRKPSKPLSTPLVRNFSRPVERPTNFVRARPEGKVIPLKPIEIVLPPVIFPLSSQGPRVQMPATHFYYRFIGSKVGVPRYLTSSTSRRKEKVKESTTSSHVRHPRPWL.

Residue Cys-444 is the Nucleophile of the active site. Disordered regions lie at residues 542–574 (KTLK…LAVD), 595–629 (ISTS…TPLV), and 698–724 (TSST…RPWL). Positions 543–554 (TLKRDKKRKKSK) are enriched in basic residues. The segment covering 562 to 572 (HHGDPLRDHLA) has biased composition (basic and acidic residues). Residues 595-618 (ISTSTKMSAPAKTVSQAGTSSQVR) show a composition bias toward polar residues.

It belongs to the class I-like SAM-binding methyltransferase superfamily. RsmB/NOP family. As to expression, expressed in testis.

May have S-adenosyl-L-methionine-dependent methyl-transferase activity. The protein is Putative methyltransferase NSUN7 (Nsun7) of Mus musculus (Mouse).